Reading from the N-terminus, the 375-residue chain is N-acetylneuraminate epimerase (375 aa).

The N-terminal stretch at 1–22 (MKLTKTALCTALFATFTFSANA) is a signal peptide. 7 Kelch repeats span residues 43–87 (TVYV…AAVD), 89–140 (KLYV…ASHG), 142–176 (KVYI…EIAA), 177–222 (AYFD…TIQG), 225–273 (LVVV…LAGA), 295–344 (KQYK…SYNN), and 346–375 (VLLI…LTIE). The Proton acceptor role is filled by Glu-231.

The protein belongs to the NanM family. Homodimer.

The protein resides in the periplasm. The enzyme catalyses N-acetyl-alpha-neuraminate = N-acetyl-beta-neuraminate. Its function is as follows. Converts alpha-N-acetylneuranimic acid (Neu5Ac) to the beta-anomer, accelerating the equilibrium between the alpha- and beta-anomers. Probably facilitates sialidase-negative bacteria to compete successfully for limited amounts of extracellular Neu5Ac, which is likely taken up in the beta-anomer. In addition, the rapid removal of sialic acid from solution might be advantageous to the bacterium to damp down host responses. In Haemophilus influenzae (strain PittEE), this protein is N-acetylneuraminate epimerase.